Consider the following 248-residue polypeptide: ATP synthase subunit a (248 aa).

The next 6 helical transmembrane spans lie at 25 to 45 (IAFT…AVMM), 83 to 103 (FFPL…VGII), 113 to 133 (LIVT…YGLA), 142 to 162 (LFVP…IEVI), 192 to 212 (FIAM…LPLG), and 215 to 235 (IALT…FAIL).

It belongs to the ATPase A chain family. F-type ATPases have 2 components, CF(1) - the catalytic core - and CF(0) - the membrane proton channel. CF(1) has five subunits: alpha(3), beta(3), gamma(1), delta(1), epsilon(1). CF(0) has four main subunits: a, b, b' and c.

It localises to the cell inner membrane. Functionally, key component of the proton channel; it plays a direct role in the translocation of protons across the membrane. This Rhodopseudomonas palustris (strain HaA2) protein is ATP synthase subunit a.